A 111-amino-acid polypeptide reads, in one-letter code: Large ribosomal subunit protein P1 (111 aa).

The segment at 84–111 (PAEAAAAEEKKEEEKEESDEDMGFGLFD) is disordered.

Belongs to the eukaryotic ribosomal protein P1/P2 family. In terms of assembly, P1 and P2 exist as dimers at the large ribosomal subunit. In terms of processing, phosphorylated.

In terms of biological role, plays an important role in the elongation step of protein synthesis. The protein is Large ribosomal subunit protein P1 of Aspergillus fumigatus (strain ATCC MYA-4609 / CBS 101355 / FGSC A1100 / Af293) (Neosartorya fumigata).